We begin with the raw amino-acid sequence, 299 residues long: RING-H2 finger protein ATL20 (299 aa).

Residues 172-192 (LIITLCIIGGITATCIAAIRI) form a helical membrane-spanning segment. An RING-type; atypical zinc finger spans residues 253 to 295 (CPICLSEYASKETVRCMPECDHCFHVQCIDEWLKIHSSCPVCR).

The protein belongs to the RING-type zinc finger family. ATL subfamily.

It is found in the membrane. It carries out the reaction S-ubiquitinyl-[E2 ubiquitin-conjugating enzyme]-L-cysteine + [acceptor protein]-L-lysine = [E2 ubiquitin-conjugating enzyme]-L-cysteine + N(6)-ubiquitinyl-[acceptor protein]-L-lysine.. Its pathway is protein modification; protein ubiquitination. In Arabidopsis thaliana (Mouse-ear cress), this protein is RING-H2 finger protein ATL20 (ATL20).